A 181-amino-acid polypeptide reads, in one-letter code: Inner membrane-spanning protein YciB (181 aa).

5 consecutive transmembrane segments (helical) span residues 10-30 (LIIFFAVYKFFDIYIASGALI), 50-70 (MHLITFAMVTVFGTLTLVFHD), 72-92 (AFIKWKVTIIYALFALALGVS), 118-138 (VTWYWVSFFAICGLVNIYVAF), and 148-168 (FKVFGLTALTLINTVITVFYL).

The protein belongs to the YciB family.

The protein resides in the cell inner membrane. Its function is as follows. Plays a role in cell envelope biogenesis, maintenance of cell envelope integrity and membrane homeostasis. This is Inner membrane-spanning protein YciB from Shewanella sp. (strain MR-4).